We begin with the raw amino-acid sequence, 765 residues long: Beta-glucosidase cel3A (765 aa).

Positions 1–24 (MRWSSPTSSSLSLVALLLVAHVDA) are cleaved as a signal peptide. Asn-66, Asn-124, Asn-250, Asn-304, Asn-311, Asn-349, Asn-549, Asn-588, Asn-657, and Asn-681 each carry an N-linked (GlcNAc...) asparagine glycan.

It belongs to the glycosyl hydrolase 3 family.

Its subcellular location is the secreted. It carries out the reaction Hydrolysis of terminal, non-reducing beta-D-glucosyl residues with release of beta-D-glucose.. The protein operates within glycan metabolism; cellulose degradation. In terms of biological role, beta-glucosidases are one of a number of cellulolytic enzymes involved in the degradation of cellulosic biomass. Catalyzes the last step releasing glucose from the inhibitory cellobiose. Shows higher activities on cellobiose and cellotriose but lower activities on laminarioligosaccharides and polymers. In Pyricularia oryzae (strain 70-15 / ATCC MYA-4617 / FGSC 8958) (Rice blast fungus), this protein is Beta-glucosidase cel3A.